Consider the following 84-residue polypeptide: Small ribosomal subunit protein bS18 (84 aa).

This sequence belongs to the bacterial ribosomal protein bS18 family. Part of the 30S ribosomal subunit. Forms a tight heterodimer with protein bS6.

In terms of biological role, binds as a heterodimer with protein bS6 to the central domain of the 16S rRNA, where it helps stabilize the platform of the 30S subunit. In Ruthia magnifica subsp. Calyptogena magnifica, this protein is Small ribosomal subunit protein bS18.